We begin with the raw amino-acid sequence, 74 residues long: Protein translocase subunit SecE (74 aa).

Residues 1–36 (MKTDFNQKIEQLKEFIEECRRVWLVLKKPTKDEYLA) lie on the Cytoplasmic side of the membrane. Residues 37 to 62 (VAKVTALGISLLGIIGYIIHVPATYI) traverse the membrane as a helical segment. The Extracellular segment spans residues 63 to 74 (KGILKPPTTPRV).

Belongs to the SecE/SEC61-gamma family. In terms of assembly, component of the Sec protein translocase complex. Heterotrimer consisting of alpha (SecY), beta (SecG) and gamma (SecE) subunits. The heterotrimers can form oligomers, although 1 heterotrimer is thought to be able to translocate proteins. Interacts with the ribosome. May interact with SecDF, and other proteins may be involved.

The protein resides in the cell membrane. In terms of biological role, essential subunit of the protein translocation channel SecYEG. Clamps together the 2 halves of SecY. May contact the channel plug during translocation. This Methanocaldococcus jannaschii (strain ATCC 43067 / DSM 2661 / JAL-1 / JCM 10045 / NBRC 100440) (Methanococcus jannaschii) protein is Protein translocase subunit SecE.